A 192-amino-acid polypeptide reads, in one-letter code: Phosphoheptose isomerase (192 aa).

One can recognise an SIS domain in the interval 37-192; it reads LADSFKAGGK…IQLIEKEMVK (156 aa). Position 52-54 (52-54) interacts with substrate; that stretch reads NGG. Residues histidine 61 and glutamate 65 each contribute to the Zn(2+) site. Substrate is bound by residues glutamate 65, 93 to 94, 119 to 121, serine 124, and glutamine 172; these read ND and STS. Zn(2+)-binding residues include glutamine 172 and histidine 180.

Belongs to the SIS family. GmhA subfamily. Homotetramer. Zn(2+) is required as a cofactor.

The protein resides in the cytoplasm. It catalyses the reaction 2 D-sedoheptulose 7-phosphate = D-glycero-alpha-D-manno-heptose 7-phosphate + D-glycero-beta-D-manno-heptose 7-phosphate. It participates in carbohydrate biosynthesis; D-glycero-D-manno-heptose 7-phosphate biosynthesis; D-glycero-alpha-D-manno-heptose 7-phosphate and D-glycero-beta-D-manno-heptose 7-phosphate from sedoheptulose 7-phosphate: step 1/1. Catalyzes the isomerization of sedoheptulose 7-phosphate in D-glycero-D-manno-heptose 7-phosphate. The polypeptide is Phosphoheptose isomerase (Enterobacter sp. (strain 638)).